A 2292-amino-acid polypeptide reads, in one-letter code: Protein Ycf2 (2292 aa).

1640-1647 (GSIGIGRS) serves as a coordination point for ATP.

This sequence belongs to the Ycf2 family.

The protein resides in the plastid. It localises to the chloroplast stroma. In terms of biological role, probable ATPase of unknown function. Its presence in a non-photosynthetic plant (Epifagus virginiana) and experiments in tobacco indicate that it has an essential function which is probably not related to photosynthesis. In Liriodendron tulipifera (Tuliptree), this protein is Protein Ycf2.